The primary structure comprises 548 residues: Natural resistance-associated macrophage protein 1 (548 aa).

Residues 1–12 (MSGDTGTPNQGG) show a composition bias toward polar residues. A disordered region spans residues 1–38 (MSGDTGTPNQGGTRYGSISSPPSPGPQQAPPGGTYLSE). The Cytoplasmic portion of the chain corresponds to 1-55 (MSGDTGTPNQGGTRYGSISSPPSPGPQQAPPGGTYLSEKIPIPDTESGAFSLRKL). The chain crosses the membrane as a helical span at residues 56 to 73 (WAFTGPGFLMSIAFLDPG). The Extracellular portion of the chain corresponds to 74–82 (NIESDLQAG). Residues 83–102 (AVAGFKLLWVLLWATVLGLL) form a helical membrane-spanning segment. At 103–139 (CQRLAARLGVVTGKDLGEVCHLYYPKVPRTLLWLTIE) the chain is on the cytoplasmic side. Residues 140–160 (LAIVGSDMQEVIGTAIAFSLL) traverse the membrane as a helical segment. Over 161 to 164 (SAGR) the chain is Extracellular. A helical transmembrane segment spans residues 165 to 184 (IPLWGGVLITIVDTFFFLFL). Over 185 to 193 (DNYGLRKLE) the chain is Cytoplasmic. The chain crosses the membrane as a helical span at residues 194–214 (AFFGFLITIMALTFGYEYVVA). Over 215 to 237 (RPAQGALLQGLFLPSCPGCGQPE) the chain is Extracellular. Residues 238 to 256 (LLQAVGIVGAIIMPHNIYL) traverse the membrane as a helical segment. Residues 257-284 (HSSLVKSREVDRSRRADIREANMYFLIE) lie on the Cytoplasmic side of the membrane. A helical membrane pass occupies residues 285–304 (ATIALSVSFFINLFVMAVFG). At 305-346 (QAFYKQTNQAAFNICANSSLHDYATIFPRDNLTVAVDIYQGG) the chain is on the extracellular side. N-linked (GlcNAc...) asparagine glycosylation is found at asparagine 321 and asparagine 335. Residues 347–366 (VILGCLFGPAALYIWAVGLL) form a helical membrane-spanning segment. The Cytoplasmic segment spans residues 367–397 (AAGQSSTMTGTYAGQFVMEGFLKLRWSRFAR). Residues 398–415 (VLLTRSCAIPPTVLLAVF) form a helical membrane-spanning segment. Topologically, residues 416–426 (RDLQDLSGLND) are extracellular. The helical transmembrane segment at 427–447 (LLNVLQSLLLPFAVLPILTFT) threads the bilayer. Over 448-463 (SMPALMQEFANGLVSK) the chain is Cytoplasmic. Residues 464 to 485 (IITSSIMVLVCAVNLYFVISYV) form a helical membrane-spanning segment. Over 486–493 (PSLPHPAY) the chain is Extracellular. A helical transmembrane segment spans residues 494–513 (FSLVALLAAAYLGLTTYLVW). Residues 514–548 (TCLITQGATRLAHSSHQRFLYGLPGEDQEEGRTSG) lie on the Cytoplasmic side of the membrane.

Belongs to the NRAMP family.

It localises to the late endosome membrane. Its subcellular location is the lysosome membrane. It catalyses the reaction Zn(2+)(in) + H(+)(out) = Zn(2+)(out) + H(+)(in). The enzyme catalyses Fe(2+)(in) + H(+)(out) = Fe(2+)(out) + H(+)(in). It carries out the reaction Mn(2+)(in) + H(+)(out) = Mn(2+)(out) + H(+)(in). Functionally, macrophage-specific antiporter that fluxes metal ions in either direction against a proton gradient. Localized to late endosomal lysosomal membranes, delivers bivalent cations from the cytosol into these acidic compartments where they may directly affect antimicrobial activity. Involved in iron metabolism and host natural resistance to infection with intracellular parasites. Pathogen resistance involves sequestration of Fe(2+) and Mn(2+), cofactors of both prokaryotic and eukaryotic catalases and superoxide dismutases, not only to protect the macrophage against its own generation of reactive oxygen species, but to deny the cations to the pathogen for synthesis of its protective enzymes. The protein is Natural resistance-associated macrophage protein 1 (SLC11A1) of Ovis aries (Sheep).